A 245-amino-acid polypeptide reads, in one-letter code: Phosducin (245 aa).

A disordered region spans residues 1–70 (MEKAKSQSLE…DKDSKERFSR (70 aa)). In terms of domain architecture, Phosducin spans 1–244 (MEKAKSQSLE…LEQTNMEEDM (244 aa)). Composition is skewed to basic and acidic residues over residues 28-50 (DWRK…KEIL) and 58-69 (SRDDKDSKERFS). Ser-73 is modified (phosphoserine; by PKA). Residues 111–245 (YGFVYELESG…EQTNMEEDME (135 aa)) form a thioredoxin fold region.

This sequence belongs to the phosducin family. Interacts with CRX. Forms a complex with the beta and gamma subunits of the GTP-binding protein, transducin. Light-induced changes in cyclic nucleotide levels modulate the phosphorylation of this protein by cAMP kinase.

It is found in the cytoplasm. It localises to the cytosol. The protein localises to the nucleus. Its subcellular location is the cell projection. The protein resides in the cilium. It is found in the photoreceptor outer segment. It localises to the photoreceptor inner segment. Functionally, inhibits the transcriptional activation activity of the cone-rod homeobox CRX. May participate in the regulation of visual phototransduction or in the integration of photoreceptor metabolism. The chain is Phosducin (PDC) from Bos taurus (Bovine).